The following is a 292-amino-acid chain: G1/S-specific cyclin-D3 (292 aa).

One can recognise a Cyclin N-terminal domain in the interval 27–152 (VLQSLLRLEE…LVLGKLKWDL (126 aa)). The segment at 256–292 (REAAQTAPSPVPKAPRGSSSQGPSQTSTPTDVTAIHL) is disordered. 2 positions are modified to phosphoserine: Ser-264 and Ser-279. Over residues 272–285 (GSSSQGPSQTSTPT) the composition is skewed to low complexity. Position 283 is a phosphothreonine (Thr-283).

This sequence belongs to the cyclin family. Cyclin D subfamily. In terms of assembly, interacts with the CDK4 and CDK6 protein kinases to form a serine/threonine kinase holoenzyme complex. The cyclin subunit imparts substrate specificity to the complex. Interacts with ATF5. Interacts with EIF3K. Component of the ternary complex cyclin D/CDK4/CDKN1B required for nuclear translocation and modulation of CDK4-mediated kinase activity. Can form similar complexes with either CDKN1A or CDKN2A. Post-translationally, phosphorylation at Thr-283 by MAP kinases is required for ubiquitination and degradation by the DCX(AMBRA1) complex. In terms of processing, ubiquitinated by the DCX(AMBRA1) complex during the transition from G1 to S cell phase, leading to its degradation: ubiquitination is dependent on Thr-283 phosphorylation. The DCX(AMBRA1) complex represents the major regulator of CCND3 stability during the G1/S transition. Polyubiquitinated by the SCF(FBXL2) complex, leading to proteasomal degradation.

It is found in the nucleus. The protein resides in the cytoplasm. In terms of biological role, regulatory component of the cyclin D3-CDK4 (DC) complex that phosphorylates and inhibits members of the retinoblastoma (RB) protein family including RB1 and regulates the cell-cycle during G(1)/S transition. Phosphorylation of RB1 allows dissociation of the transcription factor E2F from the RB/E2F complex and the subsequent transcription of E2F target genes which are responsible for the progression through the G(1) phase. Hypophosphorylates RB1 in early G(1) phase. Cyclin D-CDK4 complexes are major integrators of various mitogenenic and antimitogenic signals. Component of the ternary complex, cyclin D3/CDK4/CDKN1B, required for nuclear translocation and activity of the cyclin D-CDK4 complex. Shows transcriptional coactivator activity with ATF5 independently of CDK4. This chain is G1/S-specific cyclin-D3, found in Mus musculus (Mouse).